The primary structure comprises 222 residues: Glutathione S-transferase A4 (222 aa).

Methionine 1 carries the post-translational modification N-acetylmethionine. Positions 3–83 (TKPKLHYPNG…YIADKHHLFG (81 aa)) constitute a GST N-terminal domain. Glutathione contacts are provided by residues tyrosine 9, 54 to 55 (QV), and 67 to 68 (QT). The 124-residue stretch at 85–208 (DLKERTLIDM…EPGSKKKPPP (124 aa)) folds into the GST C-terminal domain.

The protein belongs to the GST superfamily. Alpha family. As to quaternary structure, homodimer.

Its subcellular location is the cytoplasm. The catalysed reaction is RX + glutathione = an S-substituted glutathione + a halide anion + H(+). Conjugation of reduced glutathione to a wide number of exogenous and endogenous hydrophobic electrophiles. The protein is Glutathione S-transferase A4 (GSTA4) of Bos taurus (Bovine).